The chain runs to 556 residues: DNA ligase B (556 aa).

The active-site N6-AMP-lysine intermediate is the lysine 126.

The protein belongs to the NAD-dependent DNA ligase family. LigB subfamily.

The enzyme catalyses NAD(+) + (deoxyribonucleotide)n-3'-hydroxyl + 5'-phospho-(deoxyribonucleotide)m = (deoxyribonucleotide)n+m + AMP + beta-nicotinamide D-nucleotide.. Its function is as follows. Catalyzes the formation of phosphodiester linkages between 5'-phosphoryl and 3'-hydroxyl groups in double-stranded DNA using NAD as a coenzyme and as the energy source for the reaction. This chain is DNA ligase B, found in Stutzerimonas stutzeri (strain A1501) (Pseudomonas stutzeri).